The chain runs to 601 residues: Rhizobactin siderophore biosynthesis protein RhbF (601 aa).

The protein belongs to the IucA/IucC family.

It functions in the pathway siderophore biosynthesis; rhizobactin biosynthesis. The sequence is that of Rhizobactin siderophore biosynthesis protein RhbF (rhbF) from Rhizobium meliloti (strain 1021) (Ensifer meliloti).